The chain runs to 269 residues: Tryptophan synthase alpha chain (269 aa).

Catalysis depends on proton acceptor residues Glu-49 and Asp-60.

It belongs to the TrpA family. Tetramer of two alpha and two beta chains.

It catalyses the reaction (1S,2R)-1-C-(indol-3-yl)glycerol 3-phosphate + L-serine = D-glyceraldehyde 3-phosphate + L-tryptophan + H2O. Its pathway is amino-acid biosynthesis; L-tryptophan biosynthesis; L-tryptophan from chorismate: step 5/5. Functionally, the alpha subunit is responsible for the aldol cleavage of indoleglycerol phosphate to indole and glyceraldehyde 3-phosphate. The polypeptide is Tryptophan synthase alpha chain (Salmonella arizonae (strain ATCC BAA-731 / CDC346-86 / RSK2980)).